A 569-amino-acid polypeptide reads, in one-letter code: MLTDMDISRRADLKDIAALGAEFGLLPDEMQLFGKTKAKVDLRVQQRLAEQQGKLIIVTAVTPTPHGEGKTVTTIGLTQSLKALGNKVCACIRQPSMGPVFGVKGGAAGGGYAQVVPMQELNLHLTGDIHAVSSAHNLGAAAIASRLYHETRLGKAEFELQSGQNYLDIAPNGIRWHRVVDHNDRCLREIEVGLGENNGPAYTSGFDITAASELMAILALSRNLADMRARIGKLVLAVNRQGAAISAEDLGVAGAMTALMADAVKPTLMQTLNGAPCLIHAGPFANIAHGNSSVIADDIALKLADFVVTEGGFGSDMGFEKFCNIKARQSGLAPSTAVLVTTLKALKANSGLTSDADINAPDQARLEAGFANLNWHINNVARYGIPVVVAINRFATDTDAELNWLIEAVSGTAAFGCELSETFSQGEAGALALAQTVMRACEQPSEFTLLYPDDMALEAKLSTLAEVGYGAAGVSLSEAAKLQLQELSALGYAHLPVCMAKTPLSISHDPQLKGVPQGFIVPVRELVLNAGAGFITALVGNVMTMPGLGLVPGYLKIDIGADGEITGLG.

64–71 contributes to the ATP binding site; it reads TPHGEGKT.

Belongs to the formate--tetrahydrofolate ligase family.

It catalyses the reaction (6S)-5,6,7,8-tetrahydrofolate + formate + ATP = (6R)-10-formyltetrahydrofolate + ADP + phosphate. It functions in the pathway one-carbon metabolism; tetrahydrofolate interconversion. The sequence is that of Formate--tetrahydrofolate ligase from Shewanella sp. (strain MR-7).